A 1012-amino-acid polypeptide reads, in one-letter code: RNA-binding protein 26 (1012 aa).

A Glycyl lysine isopeptide (Lys-Gly) (interchain with G-Cter in SUMO2) cross-link involves residue K94. A coiled-coil region spans residues 98–127; the sequence is LQHQEKDIKKEELTKEEEREKKFSRRLNHS. K106 is covalently cross-linked (Glycyl lysine isopeptide (Lys-Gly) (interchain with G-Cter in SUMO1); alternate). Residue K106 forms a Glycyl lysine isopeptide (Lys-Gly) (interchain with G-Cter in SUMO2); alternate linkage. Over residues 106–118 the composition is skewed to basic and acidic residues; that stretch reads KKEELTKEEEREK. The segment at 106–236 is disordered; the sequence is KKEELTKEEE…PLENNYTPVS (131 aa). S127 bears the Phosphoserine mark. The span at 134–168 shows a compositional bias: basic and acidic residues; the sequence is RYRDNRSRDERKKDDRSRKRDYDRNPPRRDSYRDR. The span at 169 to 186 shows a compositional bias: basic residues; that stretch reads YNRRRGRSRSYSRSRSRS. Basic and acidic residues-rich tracts occupy residues 187 to 201 and 209 to 227; these read WSKE…DRSR and RSRE…RTDP. Residues 288–316 form a C3H1-type zinc finger; it reads PMPKKRCRDYDEKGFCMRGDMCPFDHGSD. Residues 334 to 388 are compositionally biased toward pro residues; the sequence is QPPVVEGPPPPGLPPPPPILTPPPVNLRPPVPPPGPLPPSLPPVTGPPPPLPPLQ. Disordered regions lie at residues 334–404 and 465–520; these read QPPV…SSVP and IGLT…NFNR. Positions 394-404 are enriched in low complexity; it reads APPNSATSSVP. A Phosphoserine modification is found at S501. Position 515 is an N6-acetyllysine (K515). Residue S523 is modified to Phosphoserine. The RRM 1 domain occupies 537–611; sequence TKLELRKVPP…RFIKVYWHRE (75 aa). Phosphoserine is present on S621. A disordered region spans residues 647 to 667; sequence PVPSATTEPAEAQSATSELPQ. 2 coiled-coil regions span residues 724–800 and 828–852; these read DNNE…KSTS and KKMQ…EAAK. Positions 858 to 889 are disordered; the sequence is SGRGRGIHTRGRGTAHGRGRGRGRGRGVPGHA. Residues 862–882 are compositionally biased toward basic residues; that stretch reads RGIHTRGRGTAHGRGRGRGRG. The 70-residue stretch at 896 to 965 folds into the RRM 2 domain; that stretch reads RALEISAFTE…QDLKLAWNKP (70 aa). Positions 970 to 1012 are disordered; sequence SAVDTEEAEPDEEEFQEESLVDDSLLQDDDEEEEDNESRSWRR. Positions 973–1005 are enriched in acidic residues; that stretch reads DTEEAEPDEEEFQEESLVDDSLLQDDDEEEEDN.

In terms of tissue distribution, expressed in testis and ovary.

Its function is as follows. May be involved in the turnover of nuclear polyadenylated (pA+) RNA. In Mus musculus (Mouse), this protein is RNA-binding protein 26.